A 205-amino-acid polypeptide reads, in one-letter code: uncharacterized protein (205 aa).

The region spanning 11–71 is the HTH tetR-type domain; the sequence is DKRQAEILEA…RIIETGLDEG (61 aa). The H-T-H motif DNA-binding region spans 34–53; sequence TMKDVVEESGFSRGGVYLYF.

This is an uncharacterized protein from Bacillus subtilis (strain 168).